We begin with the raw amino-acid sequence, 379 residues long: Anhydro-N-acetylmuramic acid kinase (379 aa).

ATP is bound at residue G9–D16.

Belongs to the anhydro-N-acetylmuramic acid kinase family.

It catalyses the reaction 1,6-anhydro-N-acetyl-beta-muramate + ATP + H2O = N-acetyl-D-muramate 6-phosphate + ADP + H(+). It participates in amino-sugar metabolism; 1,6-anhydro-N-acetylmuramate degradation. It functions in the pathway cell wall biogenesis; peptidoglycan recycling. Its function is as follows. Catalyzes the specific phosphorylation of 1,6-anhydro-N-acetylmuramic acid (anhMurNAc) with the simultaneous cleavage of the 1,6-anhydro ring, generating MurNAc-6-P. Is required for the utilization of anhMurNAc either imported from the medium or derived from its own cell wall murein, and thus plays a role in cell wall recycling. The chain is Anhydro-N-acetylmuramic acid kinase from Picosynechococcus sp. (strain ATCC 27264 / PCC 7002 / PR-6) (Agmenellum quadruplicatum).